Reading from the N-terminus, the 500-residue chain is Neuronal acetylcholine receptor subunit beta-2 (500 aa).

Positions 1-24 are cleaved as a signal peptide; it reads MAGHSNSMALFSFSLLWLCSGVLG. Topologically, residues 25–237 are extracellular; sequence TDTEERLVEH…IIRRKPLFYT (213 aa). N-linked (GlcNAc...) asparagine glycosylation is found at N50 and N167. Residues C154 and C168 are joined by a disulfide bond. The chain crosses the membrane as a helical span at residues 238–258; it reads INLIIPCVLITSLAILVFYLP. The Cytoplasmic segment spans residues 259–266; the sequence is SDCGEKMT. Residues 267 to 287 form a helical membrane-spanning segment; it reads LCISVLLALTVFLLLISKIVP. Over 288–299 the chain is Extracellular; the sequence is PTSLDVPLVGKY. A helical membrane pass occupies residues 300-320; it reads LMFTMVLVTFSIVTSVCVLNV. Topologically, residues 321–458 are cytoplasmic; the sequence is HHRSPTTHTM…WKYVAMVIDR (138 aa). Residues 459–479 traverse the membrane as a helical segment; the sequence is LFLWIFVFVCVFGTVGMFLQP.

This sequence belongs to the ligand-gated ion channel (TC 1.A.9) family. Acetylcholine receptor (TC 1.A.9.1) subfamily. Beta-2/CHRNB2 sub-subfamily. In terms of assembly, neuronal AChR is a heteropentamer composed of two different types of subunits: alpha and beta. CHRNB2/Beta-2 subunit can be combined to CHRNA2/alpha-2, CHRNA3/alpha-3 or CHRNA4/alpha-4, CHRNA5/alpha-5, CHRNA6/alpha-6 and CHRNB3/beta-3 to give rise to functional receptors. CHRNA2:CHRNB2 and CHRNA4:CHRNB2 nAChR complexes exist in two subtypes: LS (low agonist sensitivity) with a (CHRNA2/4)3:(CHRNB2)2 and HS (high agonist sensitivity) with a (CHRNA2/4)2:(CHRNB2)3 stoichiometry; the subtypes differ in their subunit binding interfaces which are involved in ligand binding. Cells produce predominantly an (CHRNA4)3:(CHRNB2)2 nAChR. The stoichiometric form (CHRNA4)2:(CHRNB2)3 expression is selectively up-regulated by nicotine and has lower single channel conductance and calcium permeability. Also part of the stoichiometric forms: (CHRNA4:CHRNB2)2:CHRNB3 or (CHRNA6:CHRNB2)2:CHRNB3. Can form heteropentamers with CHRNA7, mainly found in basal forebrain cholinergic neurons. Interacts with RIC3; which is required for proper folding and assembly. Interacts with LYPD6. As to expression, expressed in most regions of the CNS.

The protein resides in the synaptic cell membrane. Its subcellular location is the cell membrane. The enzyme catalyses Ca(2+)(in) = Ca(2+)(out). The catalysed reaction is K(+)(in) = K(+)(out). It carries out the reaction Na(+)(in) = Na(+)(out). Activated by a myriad of ligands such as acetylcholine, cytisine, nicotine, choline and epibatidine. Channel potentiation by calcium is stoichiometry-selective, CHRNA4:CHRNB2 nACh receptor is achieved by calcium association with topographically distinct sites framed by anionic residues within the CHRNA4 subunit and between the CHRNA4 and CHRNB2 subunits. Oligomeric amyloid-beta protein 42 activates specifially CHRNA7:CHRNB2 nAchRs. nAChR activity is inhibited by the antagonist alpha-conotoxins BuIA, PnIA, PnIC, GID and MII, small disulfide-constrained peptides from cone snails. Its function is as follows. Component of neuronal acetylcholine receptors (nAChRs) that function as pentameric, ligand-gated cation channels with high calcium permeability among other activities. nAChRs are excitatory neurotrasnmitter receptors formed by a collection of nAChR subunits known to mediate synaptic transmission in the nervous system and the neuromuscular junction. Each nAchR subunit confers differential attributes to channel properties, including activation, deactivation and desensitization kinetics, pH sensitivity, cation permeability, and binding to allosteric modulators. CHRNB2 forms heteropentameric neuronal acetylcholine receptors with CHRNA2, CHRNA3, CHRNA4 and CHRNA6, as well as CHRNA5 and CHRNB3 as accesory subunits. Found in two major stoichiometric forms,(CHRNA4)3:(CHRNB2)2 and (CHRNA4)2:(CHRNB2)3, the two stoichiometric forms differ in their unitary conductance, calcium permeability, ACh sensitivity and potentiation by divalent cation. Heteropentameric channels with CHRNA6 and CHRNA4 exhibit high sensitivity to ACh and nicotine and are predominantly expressed in only a few brain areas, including dopaminergic neurons, norepirephrine neurons and cells of the visual system. nAChrs containing CHRNA6 subunits mediate endogenous cholinergic modulation of dopamine and gamma-aminobutyric acid (GABA) release in response to nicotine at nerve terminals. Also forms functional nAChRs with other subunits such as CHRNA7:CHRNB2, mainly expressed in basal forebrain cholinergic neurons. The protein is Neuronal acetylcholine receptor subunit beta-2 (Chrnb2) of Rattus norvegicus (Rat).